A 207-amino-acid polypeptide reads, in one-letter code: uncharacterized protein (207 aa).

Belongs to the flavoredoxin family. FMN is required as a cofactor.

This is an uncharacterized protein from Bacillus subtilis (strain 168).